We begin with the raw amino-acid sequence, 267 residues long: Ribosomal RNA small subunit methyltransferase A (267 aa).

Positions 13, 15, 40, 61, 85, and 105 each coordinate S-adenosyl-L-methionine.

It belongs to the class I-like SAM-binding methyltransferase superfamily. rRNA adenine N(6)-methyltransferase family. RsmA subfamily.

Its subcellular location is the cytoplasm. It catalyses the reaction adenosine(1518)/adenosine(1519) in 16S rRNA + 4 S-adenosyl-L-methionine = N(6)-dimethyladenosine(1518)/N(6)-dimethyladenosine(1519) in 16S rRNA + 4 S-adenosyl-L-homocysteine + 4 H(+). Functionally, specifically dimethylates two adjacent adenosines (A1518 and A1519) in the loop of a conserved hairpin near the 3'-end of 16S rRNA in the 30S particle. May play a critical role in biogenesis of 30S subunits. The polypeptide is Ribosomal RNA small subunit methyltransferase A (Bacteroides thetaiotaomicron (strain ATCC 29148 / DSM 2079 / JCM 5827 / CCUG 10774 / NCTC 10582 / VPI-5482 / E50)).